The sequence spans 454 residues: NADP-specific glutamate dehydrogenase 1 (454 aa).

Ser2 is modified (N-acetylserine). Lys110 is an active-site residue. Position 174–203 (174–203 (GVLTGKGLNWGGSLIRPEATGYGLVYYTQA)) interacts with NAD(+). Residues Lys325, Lys371, and Lys433 each participate in a glycyl lysine isopeptide (Lys-Gly) (interchain with G-Cter in ubiquitin) cross-link.

This sequence belongs to the Glu/Leu/Phe/Val dehydrogenases family. As to quaternary structure, homohexamer.

The catalysed reaction is L-glutamate + NADP(+) + H2O = 2-oxoglutarate + NH4(+) + NADPH + H(+). Functionally, catalyzes the incorporation of an ammonium ion into alpha-ketoglutarate to form L-glutamate, the major route of assimilation of ammonia into an organic form in yeast. In Saccharomyces cerevisiae (strain ATCC 204508 / S288c) (Baker's yeast), this protein is NADP-specific glutamate dehydrogenase 1.